We begin with the raw amino-acid sequence, 276 residues long: Large ribosomal subunit protein uL2 (276 aa).

The disordered stretch occupies residues 213–264 (WLGRRPHNRGVVMNPVDHPHGGGEGRTSGGRHPVTPWGKPTKGYKTRTNKRT).

This sequence belongs to the universal ribosomal protein uL2 family. As to quaternary structure, part of the 50S ribosomal subunit. Forms a bridge to the 30S subunit in the 70S ribosome.

In terms of biological role, one of the primary rRNA binding proteins. Required for association of the 30S and 50S subunits to form the 70S ribosome, for tRNA binding and peptide bond formation. It has been suggested to have peptidyltransferase activity; this is somewhat controversial. Makes several contacts with the 16S rRNA in the 70S ribosome. The protein is Large ribosomal subunit protein uL2 of Granulibacter bethesdensis (strain ATCC BAA-1260 / CGDNIH1).